The chain runs to 387 residues: Putative glutamate--cysteine ligase 2 (387 aa).

The protein belongs to the glutamate--cysteine ligase type 2 family. YbdK subfamily.

It catalyses the reaction L-cysteine + L-glutamate + ATP = gamma-L-glutamyl-L-cysteine + ADP + phosphate + H(+). Functionally, ATP-dependent carboxylate-amine ligase which exhibits weak glutamate--cysteine ligase activity. This chain is Putative glutamate--cysteine ligase 2, found in Trichormus variabilis (strain ATCC 29413 / PCC 7937) (Anabaena variabilis).